The primary structure comprises 759 residues: MTAPLWPNKNEKNHTVKRALSTDMTSNILSSTNASSNEENSRSSSAANVRSGTGANTLTNGGSTRKRLACTNCRNRRKKCDLGFPCGNCSRLELVCNVNDEDLRKKRYTNKYVKSLESHIAQLETNLKNLVQKIYPDDEQILNRMMVGDVLSALPDSSQVSINYTDQTPSLPIPATRGTFIIENDKVSQPLSSFNQQTEPSTLNSGIFNTQKQNFEESLDDQLLLRRSLTPQGEKKKKPLVKGSLYPEGPVSYKRKHPVKSDSLLPVSSLTAATDPSTFSDGITAGNSVLVNGELKKRISDLKTTVIVRGLNDDNPNSINNDPRILKSLSNFYKWLYPGYFIFVHRESFLYGFFNHSKNNYEDSSYCSVELIYAMCAVGSRLTPDLQEYSEVYYQRSKKTLLQLVFDEQSTARITTVQALFCLAFYELGKGNNQLGWYFSGLAIRVGYDMGFQLDPKVWYVDDNNLQLTQSELEIRSRIYWGCYIADHFICLMLGRTSTLSVSNSTMPESDELPEVNGTEEFRFIGRHVLQISLPLKNLIILSRLVQIFTSKIFIESEDIARKLKYLNTFNSQVYNWRQSLPEFLQWSKTLIENDDVSTDPTISYFWYCYYIVRLTFNKPFIEDSQESETVVIEIIDDLKTLLDNFGKKFGNYTKGNLYQLYSCLLAINCLKKLKEIRSSEQDSWNAQLDFFNHIFYTQLYPAYDLPKKLQEDTELETEQENQMLNQVGNINYTHDFSLSHEIDDLIRELFGVGTPQKL.

Positions 1–61 (MTAPLWPNKN…GTGANTLTNG (61 aa)) are disordered. T22 is subject to Phosphothreonine. Low complexity predominate over residues 30-51 (SSTNASSNEENSRSSSAANVRS). Positions 70–96 (CTNCRNRRKKCDLGFPCGNCSRLELVC) form a DNA-binding region, zn(2)-C6 fungal-type. Residues 229–254 (LTPQGEKKKKPLVKGSLYPEGPVSYK) form a disordered region. The short motif at 744-752 (DDLIRELFG) is the 9aaTAD element. Residue T755 is modified to Phosphothreonine.

It localises to the nucleus. Its function is as follows. TY1 element enhancer binding protein. Binds to the DNA sequence 5'-TCGGTGGTATTATTCCGA-3'. In Saccharomyces cerevisiae (strain ATCC 204508 / S288c) (Baker's yeast), this protein is TY1 enhancer activator (TEA1).